We begin with the raw amino-acid sequence, 425 residues long: Serine--tRNA ligase (425 aa).

230-232 (TAE) lines the L-serine pocket. 261–263 (RSE) contributes to the ATP binding site. Glu-284 is an L-serine binding site. 348–351 (EISS) lines the ATP pocket. Position 384 (Ser-384) interacts with L-serine.

This sequence belongs to the class-II aminoacyl-tRNA synthetase family. Type-1 seryl-tRNA synthetase subfamily. As to quaternary structure, homodimer. The tRNA molecule binds across the dimer.

Its subcellular location is the cytoplasm. It catalyses the reaction tRNA(Ser) + L-serine + ATP = L-seryl-tRNA(Ser) + AMP + diphosphate + H(+). It carries out the reaction tRNA(Sec) + L-serine + ATP = L-seryl-tRNA(Sec) + AMP + diphosphate + H(+). The protein operates within aminoacyl-tRNA biosynthesis; selenocysteinyl-tRNA(Sec) biosynthesis; L-seryl-tRNA(Sec) from L-serine and tRNA(Sec): step 1/1. Functionally, catalyzes the attachment of serine to tRNA(Ser). Is also able to aminoacylate tRNA(Sec) with serine, to form the misacylated tRNA L-seryl-tRNA(Sec), which will be further converted into selenocysteinyl-tRNA(Sec). The polypeptide is Serine--tRNA ligase (Streptococcus equi subsp. zooepidemicus (strain MGCS10565)).